The following is a 198-amino-acid chain: Protein GrpE (198 aa).

Belongs to the GrpE family. As to quaternary structure, homodimer.

Its subcellular location is the cytoplasm. Participates actively in the response to hyperosmotic and heat shock by preventing the aggregation of stress-denatured proteins, in association with DnaK and GrpE. It is the nucleotide exchange factor for DnaK and may function as a thermosensor. Unfolded proteins bind initially to DnaJ; upon interaction with the DnaJ-bound protein, DnaK hydrolyzes its bound ATP, resulting in the formation of a stable complex. GrpE releases ADP from DnaK; ATP binding to DnaK triggers the release of the substrate protein, thus completing the reaction cycle. Several rounds of ATP-dependent interactions between DnaJ, DnaK and GrpE are required for fully efficient folding. The sequence is that of Protein GrpE from Actinobacillus pleuropneumoniae serotype 5b (strain L20).